The sequence spans 560 residues: uncharacterized protein (560 aa).

Helical transmembrane passes span 9–29 (LVITILLIVLGANWLLSSFLL), 61–81 (ILVPTGFPLTTGLGLSLKYKI), 136–156 (IGIANSIATVEGFTLSLASMM), 305–325 (SLQIWGKLFAVLLHGGSASFI), and 442–462 (VVLELYCPYAIMGPVAHTNFY).

The protein resides in the membrane. This is an uncharacterized protein from Saccharomyces cerevisiae (strain ATCC 204508 / S288c) (Baker's yeast).